The following is a 244-amino-acid chain: NAD(P)H-quinone oxidoreductase subunit K (244 aa).

Positions 51, 52, 116, and 147 each coordinate [4Fe-4S] cluster.

It belongs to the complex I 20 kDa subunit family. In terms of assembly, NDH-1 can be composed of about 15 different subunits; different subcomplexes with different compositions have been identified which probably have different functions. The cofactor is [4Fe-4S] cluster.

The protein resides in the cellular thylakoid membrane. It carries out the reaction a plastoquinone + NADH + (n+1) H(+)(in) = a plastoquinol + NAD(+) + n H(+)(out). The catalysed reaction is a plastoquinone + NADPH + (n+1) H(+)(in) = a plastoquinol + NADP(+) + n H(+)(out). Functionally, NDH-1 shuttles electrons from an unknown electron donor, via FMN and iron-sulfur (Fe-S) centers, to quinones in the respiratory and/or the photosynthetic chain. The immediate electron acceptor for the enzyme in this species is believed to be plastoquinone. Couples the redox reaction to proton translocation, and thus conserves the redox energy in a proton gradient. Cyanobacterial NDH-1 also plays a role in inorganic carbon-concentration. The chain is NAD(P)H-quinone oxidoreductase subunit K from Synechococcus sp. (strain JA-2-3B'a(2-13)) (Cyanobacteria bacterium Yellowstone B-Prime).